We begin with the raw amino-acid sequence, 109 residues long: Short-chain dehydrogenase/reductase homolog YusS (109 aa).

The protein belongs to the short-chain dehydrogenases/reductases (SDR) family.

This is Short-chain dehydrogenase/reductase homolog YusS (yusS) from Bacillus subtilis (strain 168).